We begin with the raw amino-acid sequence, 666 residues long: Endogenous retrovirus group K member 10 Gag polyprotein (666 aa).

Glycine 2 is lipidated: N-myristoyl glycine. The tract at residues 164–183 (EGKGPELMGPSESKPRGTSP) is disordered. CCHC-type zinc fingers lie at residues 544–561 (GKCYNCGQIGHLKKNCPV) and 580–597 (DLCPRCKKGKHWASQCRS). The segment at 598 to 642 (KFDKNGQPLSGNEQRGQPQAPQQTGAFPIQPFVPQGFQGQQPPLS) is disordered. Residues 604 to 622 (QPLSGNEQRGQPQAPQQTG) show a composition bias toward polar residues. A compositionally biased stretch (low complexity) spans 624-640 (FPIQPFVPQGFQGQQPP).

It belongs to the beta type-B retroviral Gag protein family. HERV class-II K(HML-2) gag subfamily. Post-translationally, myristoylation is essential for retroviral assembly. Alteration of the glycine residue leads to a block in the budding of particles and an accumulation of Gag inside the cell. In terms of processing, specific enzymatic cleavages may yield mature proteins.

The protein localises to the cell membrane. Functionally, the products of the Gag polyproteins of infectious retroviruses perform highly complex orchestrated tasks during the assembly, budding, maturation, and infection stages of the viral replication cycle. During viral assembly, the proteins form membrane associations and self-associations that ultimately result in budding of an immature virion from the infected cell. Gag precursors also function during viral assembly to selectively bind and package two plus strands of genomic RNA. Endogenous Gag proteins may have kept, lost or modified their original function during evolution. The chain is Endogenous retrovirus group K member 10 Gag polyprotein (ERVK-10) from Homo sapiens (Human).